A 926-amino-acid chain; its full sequence is Protein Niban 1 (926 aa).

G2 is lipidated: N-myristoyl glycine. A phosphoserine mark is found at S578, S581, S595, S601, and S640. Disordered stretches follow at residues 604–699 (LPGA…VPGS) and 719–889 (VEND…EQVN). Polar residues predominate over residues 661 to 672 (VENTAGPLSSHL). A Phosphoserine modification is found at S699. The segment covering 733 to 745 (NIKEEESKIHPEA) has biased composition (basic and acidic residues). The residue at position 755 (S755) is a Phosphoserine. The span at 756 to 767 (CEEREVREKEAQ) shows a compositional bias: basic and acidic residues. Positions 784–797 (GRGSTSQSTSGGLT) are enriched in low complexity. Over residues 840 to 854 (VTVTPQEDATLSSNP) the composition is skewed to polar residues. S923 is subject to Phosphoserine.

This sequence belongs to the Niban family.

Its subcellular location is the cytoplasm. The protein localises to the membrane. Functionally, regulates phosphorylation of a number of proteins involved in translation regulation including EIF2A, EIF4EBP1 and RPS6KB1. May be involved in the endoplasmic reticulum stress response. In Mus musculus (Mouse), this protein is Protein Niban 1.